A 524-amino-acid polypeptide reads, in one-letter code: MTRLALLSTSDKTGLVELAQQLVNEYGFTLVSSGGTAVTIEKAGLPVTKVSDYTGSPEILGGRVKTLHPRIHGGILARRSLESDVQDLTENNIQGIDLVVVNLYPFEETIAKQKAQGITDPDQALADAVEQIDIGGPTMIRAAAKNHAHVTVLCDPQQYASYLQELKHGEGETSLPFRQACALKVFERMASYDRAIATHLRQSLATTDSQTQLSILGTAKQTLRYGENPHQNAVWYQESDTASGWAAAQQLQGKELSYNNLVDLEAARRVIAEFAQAETQPTVAILKHNNPCGVAQGETLLQAYEKALAADSVSAFGGIVAMNRAIDTDTAQVLTKTFLECIVAPECQPEAAAVLQAKSNLRVLVLPDLVSGPAVTVKAIAGGWLAQAADETLTPPADWQIVTQAKPTEAQLAELLFAWKVVKHVKSNAIVVTKDHTTLGVGAGQMNRVGSVNIALQQAGEKAQGGTLASDGFFPFDDSVRTAAAAGITAIIQPGGSIRDKDSIQAADELGIVMAFTGTRHFLH.

One can recognise an MGS-like domain in the interval Met1–Cys154.

This sequence belongs to the PurH family.

The enzyme catalyses (6R)-10-formyltetrahydrofolate + 5-amino-1-(5-phospho-beta-D-ribosyl)imidazole-4-carboxamide = 5-formamido-1-(5-phospho-D-ribosyl)imidazole-4-carboxamide + (6S)-5,6,7,8-tetrahydrofolate. It catalyses the reaction IMP + H2O = 5-formamido-1-(5-phospho-D-ribosyl)imidazole-4-carboxamide. It participates in purine metabolism; IMP biosynthesis via de novo pathway; 5-formamido-1-(5-phospho-D-ribosyl)imidazole-4-carboxamide from 5-amino-1-(5-phospho-D-ribosyl)imidazole-4-carboxamide (10-formyl THF route): step 1/1. The protein operates within purine metabolism; IMP biosynthesis via de novo pathway; IMP from 5-formamido-1-(5-phospho-D-ribosyl)imidazole-4-carboxamide: step 1/1. The sequence is that of Bifunctional purine biosynthesis protein PurH from Acaryochloris marina (strain MBIC 11017).